The primary structure comprises 447 residues: NADP-specific glutamate dehydrogenase (447 aa).

The substrate site is built by Lys-92, Gln-113, and Lys-116. The active-site Proton donor is the Lys-128. Residue Gly-167 coordinates substrate. 2 residues coordinate NADP(+): Thr-212 and Asn-243. Ser-379 lines the substrate pocket.

Belongs to the Glu/Leu/Phe/Val dehydrogenases family. In terms of assembly, homohexamer.

It carries out the reaction L-glutamate + NADP(+) + H2O = 2-oxoglutarate + NH4(+) + NADPH + H(+). Functionally, catalyzes the reversible oxidative deamination of glutamate to alpha-ketoglutarate and ammonia. In Corynebacterium glutamicum (strain ATCC 13032 / DSM 20300 / JCM 1318 / BCRC 11384 / CCUG 27702 / LMG 3730 / NBRC 12168 / NCIMB 10025 / NRRL B-2784 / 534), this protein is NADP-specific glutamate dehydrogenase (gdh).